The primary structure comprises 358 residues: Peptide chain release factor 1 (358 aa).

The residue at position 233 (Gln-233) is an N5-methylglutamine.

It belongs to the prokaryotic/mitochondrial release factor family. In terms of processing, methylated by PrmC. Methylation increases the termination efficiency of RF1.

It is found in the cytoplasm. Functionally, peptide chain release factor 1 directs the termination of translation in response to the peptide chain termination codons UAG and UAA. The protein is Peptide chain release factor 1 of Lysinibacillus sphaericus (strain C3-41).